The chain runs to 520 residues: Beta-2-syntrophin (520 aa).

Positions 45–95 (EPPAAAFNGLPNGGGGESLPGSPNRGLGPPSPPAPPRGPAGEASASPPVRR) are disordered. Over residues 63–72 (LPGSPNRGLG) the composition is skewed to low complexity. A compositionally biased stretch (pro residues) spans 73-82 (PPSPPAPPRG). Residues S75, S90, S109, S191, S202, S213, S373, and S375 each carry the phosphoserine modification. Over residues 83–93 (PAGEASASPPV) the composition is skewed to low complexity. One can recognise a PDZ domain in the interval 95 to 178 (RVRVVKQEAG…EVLLEVKFIR (84 aa)). PH domains lie at 143 to 280 (ILSV…TNIM) and 305 to 417 (EVKH…QGCH). The interval 195–220 (WEGASPQSPSFSGSEDSGSPKHQNTT) is disordered. The segment covering 197–211 (GASPQSPSFSGSEDS) has biased composition (low complexity). The SU domain occupies 464 to 520 (PFERLKMSADDGIRNLYLDFGGPEGELTMDLHSCPKPIVFVLHTFLSAKVTRMGLLV). The segment at 498–520 (PKPIVFVLHTFLSAKVTRMGLLV) is calmodulin-binding.

Belongs to the syntrophin family. Monomer and homodimer. Interacts with the dystrophin protein DMD and related protein DTNA; and with the other members of the syntrophin family: SNTA1 and SNTB1. Interacts with the neuroregulin receptor ERBB4. Interacts with PTPRN when phosphorylated, protecting PTPRN from protein cleavage by CAPN1. Dephosphorylation upon insulin stimulation disrupts the interaction with PTPRN and results in the cleavage of PTPRN. Interacts with the sodium channel proteins SCN4A and SCN5A. Interacts with SAST, MAST205, microtubules and microtubule-associated proteins. Interacts with the dystrophin related protein UTRN. Interacts with DTNB. In terms of processing, phosphorylated. Partially dephosphorylated upon insulin stimulation. Ubiquitous. Expressed at high levels in the testis.

The protein resides in the membrane. It is found in the cytoplasmic vesicle. The protein localises to the secretory vesicle membrane. It localises to the cell junction. Its subcellular location is the cytoplasm. The protein resides in the cytoskeleton. Adapter protein that binds to and probably organizes the subcellular localization of a variety of membrane proteins. May link various receptors to the actin cytoskeleton and the dystrophin glycoprotein complex. May play a role in the regulation of secretory granules via its interaction with PTPRN. This Mus musculus (Mouse) protein is Beta-2-syntrophin (Sntb2).